A 571-amino-acid polypeptide reads, in one-letter code: Potassium-transporting ATPase potassium-binding subunit (571 aa).

10 helical membrane passes run 7 to 27 (LQFA…GGYL), 66 to 86 (TYAL…YGIA), 137 to 157 (GLAV…AALI), 188 to 208 (FVVA…GFIV), 255 to 275 (IGNF…CFAF), 286 to 306 (WAVL…AMSF), 390 to 410 (VGLN…GLMV), 430 to 450 (TLYI…SVLI), 497 to 517 (IGVA…AIAG), and 538 to 558 (LFVG…FFPA).

It belongs to the KdpA family. The system is composed of three essential subunits: KdpA, KdpB and KdpC.

Its subcellular location is the cell membrane. In terms of biological role, part of the high-affinity ATP-driven potassium transport (or Kdp) system, which catalyzes the hydrolysis of ATP coupled with the electrogenic transport of potassium into the cytoplasm. This subunit binds the extracellular potassium ions and delivers the ions to the membrane domain of KdpB through an intramembrane tunnel. In Mycobacterium bovis (strain ATCC BAA-935 / AF2122/97), this protein is Potassium-transporting ATPase potassium-binding subunit.